A 784-amino-acid polypeptide reads, in one-letter code: Ent-kaurene synthase 1, chloroplastic (784 aa).

The transit peptide at 1-28 (MNLSLCIASPLLTKSSRPTALSAIHTAS) directs the protein to the chloroplast. Mg(2+) is bound by residues Asp-528, Asp-532, Asn-672, and Glu-680. The short motif at 528 to 532 (DDFFD) is the DDXXD motif element.

Belongs to the terpene synthase family. Mg(2+) serves as cofactor. As to expression, accumulates in leaves.

It localises to the plastid. Its subcellular location is the chloroplast. The catalysed reaction is ent-copalyl diphosphate = ent-kaur-16-ene + diphosphate. It functions in the pathway secondary metabolite biosynthesis; terpenoid biosynthesis. It participates in plant hormone biosynthesis; gibberellin biosynthesis. Its function is as follows. Involved in the biosynthesis of ent-kaurene diterpenoids natural products such as oridonin, miltiradiene, eriocalyxin B and nezukol, known to exhibit antitumor, anti-inflammatory and antibacterial activities, and in the production of gibberellins phytohormones. Catalyzes the conversion of ent-copalyl diphosphate (ent-CPP) to ent-kaurene. This Stevia rebaudiana (Stevia) protein is Ent-kaurene synthase 1, chloroplastic.